We begin with the raw amino-acid sequence, 125 residues long: MTRNKVEICGVDTAKLPVLKNEEMRKLFREMQSGEISAREKLVNGNLRLVLSVIQRFNNRGEYVDDLFQVGCIGLMKSIDNFDLGQNVKFSTYAVPMIIGEIRRYLRDNNPIRVSRSLRDIAYKA.

This sequence belongs to the sigma-70 factor family.

Its function is as follows. Sigma factors are initiation factors that promote the attachment of RNA polymerase to specific initiation sites and are then released. The polypeptide is Putative RNA polymerase sigma-G factor (Bacillus thuringiensis subsp. kurstaki).